An 82-amino-acid chain; its full sequence is Large ribosomal subunit protein bL31B-2 (82 aa).

The protein belongs to the bacterial ribosomal protein bL31 family. Type B subfamily. In terms of assembly, part of the 50S ribosomal subunit.

This Streptomyces avermitilis (strain ATCC 31267 / DSM 46492 / JCM 5070 / NBRC 14893 / NCIMB 12804 / NRRL 8165 / MA-4680) protein is Large ribosomal subunit protein bL31B-2.